Here is a 691-residue protein sequence, read N- to C-terminus: MPRSHNIEDYRNFGIMAHIDAGKTTTTERILYYSGKSHKIGEVHDGAATMDWMEQEQERGITITSAATTTFWNGKRLNIIDTPGHVDFTIEVERSLRVLDGAVCVLDGNQGVEPQTETVWRQADKYHVPRIVFVNKMDKIGADFYRCVDEIKTKVGGRPVCIQLPIGSESDFKGIIDLVRMKAVVWQDEALGAKYNDAEIPAELLAKAEEYRHILIETAVELDDDVMSAYLDGVEPDEETLKRLIRKAVRYITFIPILCGSAFKNKGVQPLLDAVVDYLPSPIDREAIKGVDVDTGEEVLRMPRDEDPFSMLAFKIMDDPFVGTLTFARVYSGHVESGTTVLNSTKDKKERIGRMLLMHANNREDVKEAYSGDIVALAGLKDTRTGDTLCDLSKPVILERMEFPEPVIEIAIEPKSKADQEKLGLALAKLAAEDPSFRVSTDQESGQTILKGMGELHLDIKVDILRRTYKVDANIGAPQVAYRERLTKRVEIDHTHKKQTGGTGQFARVIIVFEPNEAGAGNVFESKIVGGSVPKEFIPGVEKGINSVMGSGILAGFPVVDVKATLIDGGFHDVDSSVLAFEIAARAAFREALQKGGSVLLEPIMKVEVTTPEDYTGSVMGDLLGRRGQVQGQDMRGNAVVINAMVPLANMFGYVNQLRSFSQGRANYTMQFDHYEQVPAGEAAKVQAKYA.

Positions 8-283 constitute a tr-type G domain; sequence EDYRNFGIMA…AVVDYLPSPI (276 aa). GTP is bound by residues 17–24, 81–85, and 135–138; these read AHIDAGKT, DTPGH, and NKMD.

This sequence belongs to the TRAFAC class translation factor GTPase superfamily. Classic translation factor GTPase family. EF-G/EF-2 subfamily.

It is found in the cytoplasm. Its function is as follows. Catalyzes the GTP-dependent ribosomal translocation step during translation elongation. During this step, the ribosome changes from the pre-translocational (PRE) to the post-translocational (POST) state as the newly formed A-site-bound peptidyl-tRNA and P-site-bound deacylated tRNA move to the P and E sites, respectively. Catalyzes the coordinated movement of the two tRNA molecules, the mRNA and conformational changes in the ribosome. The chain is Elongation factor G from Methylocella silvestris (strain DSM 15510 / CIP 108128 / LMG 27833 / NCIMB 13906 / BL2).